The sequence spans 556 residues: Formate--tetrahydrofolate ligase (556 aa).

An ATP-binding site is contributed by 65–72 (TPAGEGKS).

Belongs to the formate--tetrahydrofolate ligase family.

It carries out the reaction (6S)-5,6,7,8-tetrahydrofolate + formate + ATP = (6R)-10-formyltetrahydrofolate + ADP + phosphate. It functions in the pathway one-carbon metabolism; tetrahydrofolate interconversion. The chain is Formate--tetrahydrofolate ligase from Streptococcus thermophilus (strain ATCC BAA-250 / LMG 18311).